We begin with the raw amino-acid sequence, 368 residues long: Quinolinate synthase (368 aa).

Iminosuccinate contacts are provided by histidine 46 and serine 63. Cysteine 110 contributes to the [4Fe-4S] cluster binding site. Residues 141-143 and serine 162 contribute to the iminosuccinate site; that span reads YVN. Cysteine 230 is a [4Fe-4S] cluster binding site. Residues 256-258 and threonine 273 contribute to the iminosuccinate site; that span reads HPE. Cysteine 320 contacts [4Fe-4S] cluster.

The protein belongs to the quinolinate synthase family. Type 3 subfamily. The cofactor is [4Fe-4S] cluster.

The protein resides in the cytoplasm. The catalysed reaction is iminosuccinate + dihydroxyacetone phosphate = quinolinate + phosphate + 2 H2O + H(+). It participates in cofactor biosynthesis; NAD(+) biosynthesis; quinolinate from iminoaspartate: step 1/1. Functionally, catalyzes the condensation of iminoaspartate with dihydroxyacetone phosphate to form quinolinate. In Bacillus cereus (strain ATCC 14579 / DSM 31 / CCUG 7414 / JCM 2152 / NBRC 15305 / NCIMB 9373 / NCTC 2599 / NRRL B-3711), this protein is Quinolinate synthase.